The chain runs to 608 residues: Signal transduction histidine-protein kinase AtoS (608 aa).

Over 1–15 (MHYMKWIYPRRLRNQ) the chain is Cytoplasmic. A helical membrane pass occupies residues 16–36 (MILMAILMVIVPTLTIGYIVE). The Periplasmic segment spans residues 37-189 (TEGRSAVLSE…DIRRQAWKMD (153 aa)). The chain crosses the membrane as a helical span at residues 190–210 (VRIIIVLTAGLLISLLLIVLF). At 211–608 (SRRLSANIDI…PINPQGNQTV (398 aa)) the chain is on the cytoplasmic side. An HAMP domain is found at 212-262 (RRLSANIDIITDGLSTLAQNIPTRLPQLPGEMGQISQSVNNLAQALRETRT). The PAS domain occupies 260 to 305 (TRTLNDLIIENAADGVIAIDRQGDVTTMNPAAEVITGYQRHELVGQ). In terms of domain architecture, PAC spans 326 to 382 (HGTEHVALEISFPGRDRTIELSVTTSRIHNTHGEMIGALVIFSDLTARKETQRRMAQ). A Histidine kinase domain is found at 395 to 602 (GVAHEVRNPL…TFTLILPINP (208 aa)). Position 398 is a phosphohistidine; by autocatalysis (His-398).

Homodimer. In terms of processing, autophosphorylated. Each AtoS molecule may phosphorylate its partner within the dimer rather than phosphorylating itself.

The protein localises to the cell inner membrane. It catalyses the reaction ATP + protein L-histidine = ADP + protein N-phospho-L-histidine.. Its function is as follows. Member of the two-component regulatory system AtoS/AtoC. In the presence of acetoacetate, AtoS/AtoC stimulates the expression of the atoDAEB operon, leading to short chain fatty acid catabolism and activation of the poly-(R)-3-hydroxybutyrate (cPHB) biosynthetic pathway. Also induces the operon in response to spermidine. Involved in the regulation of motility and chemotaxis, via transcriptional induction of the flagellar regulon. AtoS is a membrane-associated kinase that phosphorylates and activates AtoC in response to environmental signals. This is Signal transduction histidine-protein kinase AtoS (atoS) from Escherichia coli (strain K12).